Reading from the N-terminus, the 1358-residue chain is DNA-directed RNA polymerase subunit beta (1358 aa).

It belongs to the RNA polymerase beta chain family. As to quaternary structure, the RNAP catalytic core consists of 2 alpha, 1 beta, 1 beta' and 1 omega subunit. When a sigma factor is associated with the core the holoenzyme is formed, which can initiate transcription.

It catalyses the reaction RNA(n) + a ribonucleoside 5'-triphosphate = RNA(n+1) + diphosphate. In terms of biological role, DNA-dependent RNA polymerase catalyzes the transcription of DNA into RNA using the four ribonucleoside triphosphates as substrates. The sequence is that of DNA-directed RNA polymerase subunit beta from Francisella tularensis subsp. holarctica (strain OSU18).